We begin with the raw amino-acid sequence, 195 residues long: MIRKVKPEIRVVGFDDGTFSFSSKVAHGRTILVGVVMKGAREVVGVLSRWITVDGTDATEKLIDAVVNSRFKDLRVIMLKGVTYGGFNIVDLDKLYLETGLPVLVVIRKKPDLRAMEAALRKHFPDWRERFEVLRRAPPLFELIPGKLYLQTVGLSPETAAEIVRTTTKTGLIPEPLRLAHMIASAVMTGESTKE.

It belongs to the UPF0215 family.

This chain is UPF0215 protein TGAM_0348, found in Thermococcus gammatolerans (strain DSM 15229 / JCM 11827 / EJ3).